The primary structure comprises 68 residues: Movement protein TGBp3 (68 aa).

The Lumenal portion of the chain corresponds to 1 to 6; that stretch reads MFSGKE. The helical transmembrane segment at 7 to 26 threads the bilayer; that stretch reads ITLFALSTLIALIVLNYMSA. Over 27–68 the chain is Cytoplasmic; the sequence is TPNPVCLIELTGHSAVLRGNNCESLTSGVIEALSAHLHGLRN.

It belongs to the Tymovirales TGBp3 protein family.

Its subcellular location is the host endoplasmic reticulum membrane. Its function is as follows. Plays a role in viral cell-to-cell propagation, by facilitating genome transport to neighboring plant cells through plasmosdesmata. May induce the formation of granular vesicles derived from the Endoplasmic reticulum, which align on actin filaments. The protein is Movement protein TGBp3 of Papaya mosaic potexvirus (PMV).